The primary structure comprises 765 residues: Phosphoribosylformylglycinamidine synthase subunit PurL (765 aa).

The segment covering 1-13 (MTVSPTSAPTQAI) has biased composition (polar residues). A disordered region spans residues 1-32 (MTVSPTSAPTQAIDTVERAATTPDEPQPFGEL). The active site involves histidine 65. ATP is bound by residues tyrosine 68 and lysine 112. A Mg(2+)-binding site is contributed by glutamate 114. Substrate is bound by residues 115 to 118 (SHNH) and arginine 137. Catalysis depends on histidine 116, which acts as the Proton acceptor. Position 138 (aspartate 138) interacts with Mg(2+). Glutamine 263 is a binding site for substrate. Residue aspartate 291 coordinates Mg(2+). Residue 335–337 (ESQ) coordinates substrate. Residues asparagine 523 and glycine 560 each contribute to the ATP site. Asparagine 561 lines the Mg(2+) pocket. Serine 563 contacts substrate.

Belongs to the FGAMS family. In terms of assembly, monomer. Part of the FGAM synthase complex composed of 1 PurL, 1 PurQ and 2 PurS subunits.

The protein resides in the cytoplasm. It catalyses the reaction N(2)-formyl-N(1)-(5-phospho-beta-D-ribosyl)glycinamide + L-glutamine + ATP + H2O = 2-formamido-N(1)-(5-O-phospho-beta-D-ribosyl)acetamidine + L-glutamate + ADP + phosphate + H(+). Its pathway is purine metabolism; IMP biosynthesis via de novo pathway; 5-amino-1-(5-phospho-D-ribosyl)imidazole from N(2)-formyl-N(1)-(5-phospho-D-ribosyl)glycinamide: step 1/2. In terms of biological role, part of the phosphoribosylformylglycinamidine synthase complex involved in the purines biosynthetic pathway. Catalyzes the ATP-dependent conversion of formylglycinamide ribonucleotide (FGAR) and glutamine to yield formylglycinamidine ribonucleotide (FGAM) and glutamate. The FGAM synthase complex is composed of three subunits. PurQ produces an ammonia molecule by converting glutamine to glutamate. PurL transfers the ammonia molecule to FGAR to form FGAM in an ATP-dependent manner. PurS interacts with PurQ and PurL and is thought to assist in the transfer of the ammonia molecule from PurQ to PurL. The polypeptide is Phosphoribosylformylglycinamidine synthase subunit PurL (Mycobacterium avium (strain 104)).